A 211-amino-acid chain; its full sequence is Pyridoxine/pyridoxamine 5'-phosphate oxidase (211 aa).

Substrate-binding positions include 7 to 10 (RRDY) and K65. FMN-binding positions include 60–65 (RIVLLK), 75–76 (YT), R81, K82, and Q104. Y122, R126, and S130 together coordinate substrate. FMN is bound by residues 139 to 140 (QS) and W184. Position 190 to 192 (190 to 192 (RLH)) interacts with substrate. R194 lines the FMN pocket.

The protein belongs to the pyridoxamine 5'-phosphate oxidase family. As to quaternary structure, homodimer. The cofactor is FMN.

It catalyses the reaction pyridoxamine 5'-phosphate + O2 + H2O = pyridoxal 5'-phosphate + H2O2 + NH4(+). The catalysed reaction is pyridoxine 5'-phosphate + O2 = pyridoxal 5'-phosphate + H2O2. It functions in the pathway cofactor metabolism; pyridoxal 5'-phosphate salvage; pyridoxal 5'-phosphate from pyridoxamine 5'-phosphate: step 1/1. The protein operates within cofactor metabolism; pyridoxal 5'-phosphate salvage; pyridoxal 5'-phosphate from pyridoxine 5'-phosphate: step 1/1. Catalyzes the oxidation of either pyridoxine 5'-phosphate (PNP) or pyridoxamine 5'-phosphate (PMP) into pyridoxal 5'-phosphate (PLP). This Aliivibrio fischeri (strain ATCC 700601 / ES114) (Vibrio fischeri) protein is Pyridoxine/pyridoxamine 5'-phosphate oxidase.